The primary structure comprises 197 residues: Ycf20-like protein (197 aa).

The next 3 membrane-spanning stretches (helical) occupy residues 113-133, 138-158, and 173-193; these read MKIFLLLLGFYTANALATILG, WDVLVAGIVVAAIEGIGMLMY, and FVVFMNFWKAGVCLGLFVDAF.

It belongs to the ycf20 family.

The protein localises to the membrane. The sequence is that of Ycf20-like protein from Arabidopsis thaliana (Mouse-ear cress).